The chain runs to 445 residues: Pre-B-cell leukemia transcription factor 2 (445 aa).

The tract at residues 13–44 (VGIPGLPIHGGPQTLTPHPMHEPPTDNGEPRK) is disordered. Residues 31-44 (PMHEPPTDNGEPRK) show a composition bias toward basic and acidic residues. One can recognise a PBC domain in the interval 42 to 236 (PRKQDIGDIL…VMILRSRFLD (195 aa)). A PBC-A region spans residues 49-128 (DILQQIMTIT…EGVAGPEKGG (80 aa)). The tract at residues 131–236 (AAAAAAAAAS…VMILRSRFLD (106 aa)) is PBC-B. Positions 237–299 (ARRKRRNFSK…NKRIRYKKNI (63 aa)) form a DNA-binding region, homeobox; TALE-type. Over residues 319–332 (QGGHSGANSPTTPT) the composition is skewed to polar residues. Residues 319 to 338 (QGGHSGANSPTTPTSAGSGG) are disordered.

It belongs to the TALE/PBX homeobox family.

The protein localises to the nucleus. Its function is as follows. Transcriptional activator that binds the sequence 5'-ATCAATCAA-3'. This is Pre-B-cell leukemia transcription factor 2 (pbx2) from Xenopus laevis (African clawed frog).